Consider the following 1185-residue polypeptide: Syntaxin-binding protein 5-like (1185 aa).

Position 1 is an N-acetylmethionine (methionine 1). A disordered region spans residues 15 to 44; sequence ASSPGSGSSSGSNSGGAGSGSVHPGGTAGL. A compositionally biased stretch (low complexity) spans 16 to 26; sequence SSPGSGSSSGS. 10 WD repeats span residues 73–106, 113–152, 157–193, 212–246, 252–284, 306–348, 356–390, 412–489, 517–628, and 642–704; these read TALAFDPVQKILAIGTRTGAIRILGRPGVDCYCQ, VLQLQFLINEGALVSASSDDTLHLWNLRQKRPAILHSLKF, ITYCHLPFQSKWLYVGTERGNTHIVNIESFILSGYVI, HLSDSPRDEGKLLIGYENGTVVFWDLKSKRAELRV, IHSIDWHHEGKQFMCSHSDGSLTLWNLKSPSRP, PILK…KAIT, IVEFLTLCETPYPNEFQEPYAVAVLLEKDLIVVDL, TCTA…YKLK, QMIY…DLVI, and TSLS…IADN. Threonine 567 carries the post-translational modification Phosphothreonine. Residues 567–601 are disordered; sequence TPEPETSPPFPDLSSQLPPSRSLSGSTNTVSSEGV. Phosphoserine is present on residues serine 573, serine 588, and serine 592. Over residues 578–592 the composition is skewed to low complexity; sequence DLSSQLPPSRSLSGS. At threonine 595 the chain carries Phosphothreonine. The residue at position 598 (serine 598) is a Phosphoserine. Arginine 708 carries the post-translational modification Omega-N-methylarginine. Residues 747–768 show a composition bias toward polar residues; that stretch reads TSDHVNGHCTSPTSQSCSSGKR. A disordered region spans residues 747-770; that stretch reads TSDHVNGHCTSPTSQSCSSGKRLS. Serine 762, serine 764, serine 765, serine 770, serine 771, serine 792, serine 799, serine 811, serine 819, serine 821, and serine 822 each carry phosphoserine. WD repeat units lie at residues 831-888, 897-968, 973-1017, and 1031-1054; these read ITAL…SGTF, TFSC…QTCL, ITET…LDVN, and CFTNEGQALYLVSPTEIQRLTYSQ. Threonine 1092 carries the phosphothreonine modification. Positions 1120-1180 constitute a v-SNARE coiled-coil homology domain; the sequence is SIEGMKGAAG…HELMLKYKDK (61 aa).

This sequence belongs to the WD repeat L(2)GL family. Interacts with STX1A and STX4. Post-translationally, phosphorylated, leading to STXBP5L increased turnover and subsequent de-repression of insulin secretion. Phosphorylated on serine residues in response to glucose or phorbol esters. In terms of processing, ubiquitinated by the E3 ligase SYVN1, leading to STXBP5L proteasomal degradation. As to expression, detected in hippocampus and cerebellum. Expressed in pancreatic beta-cells where it modulates insulin secretion.

The protein localises to the cytoplasm. The protein resides in the cell membrane. It is found in the membrane. Its function is as follows. Plays a role in vesicle trafficking and exocytosis inhibition. In pancreatic beta-cells, inhibits insulin secretion probably by interacting with and regulating STX1A and STX4, key t-SNARE proteins involved in the fusion of insulin granules to the plasma membrane. Also plays a role in neurotransmitter release by inhibiting basal acetylcholine release from axon terminals and by preventing synaptic fatigue upon repetitive stimulation. Promotes as well axonal outgrowth. In Mus musculus (Mouse), this protein is Syntaxin-binding protein 5-like (Stxbp5l).